Here is a 274-residue protein sequence, read N- to C-terminus: Exosome complex component RRP40 (274 aa).

Ala2 is modified (N-acetylalanine). Residue Lys150 forms a Glycyl lysine isopeptide (Lys-Gly) (interchain with G-Cter in SUMO2) linkage.

Belongs to the RRP40 family. In terms of assembly, component of the RNA exosome core complex (Exo-9), composed of EXOSC1, EXOSC2, EXOSC3, EXOSC4, EXOSC5, EXOSC6, EXOSC7, EXOSC8 and EXOSC9; within the complex interacts with EXOSC5 and EXOSC9. The catalytically inactive RNA exosome core complex (Exo-9) associates with the catalytic subunit EXOSC10/RRP6. Exo-9 may associate with DIS3 to form the nucleolar exosome complex, or DIS3L to form the cytoplasmic exosome complex. Exo-9 is formed by a hexameric base ring consisting of the heterodimers EXOSC4-EXOSC9, EXOSC5-EXOSC8 and EXOSC6-EXOSC7, and a cap ring consisting of EXOSC1, EXOSC2 and EXOSC3. The RNA exosome complex associates with cofactors C1D/RRP47, MPHOSPH6/MPP6 and MTREX/MTR4. Interacts with MPHOSPH6/MPP6; the interaction is direct. Interacts with GTPBP1. Interacts with ZC3HAV1. Interacts with DDX17 only in the presence of ZC3HAV1 in an RNA-independent manner. Interacts with DHX36; this interaction occurs in a RNase-insensitive manner. Interacts with HBS1L isoform 2.

The protein localises to the cytoplasm. It is found in the nucleus. Its subcellular location is the nucleolus. Its function is as follows. Non-catalytic component of the RNA exosome complex which has 3'-&gt;5' exoribonuclease activity and participates in a multitude of cellular RNA processing and degradation events. In the nucleus, the RNA exosome complex is involved in proper maturation of stable RNA species such as rRNA, snRNA and snoRNA, in the elimination of RNA processing by-products and non-coding 'pervasive' transcripts, such as antisense RNA species and promoter-upstream transcripts (PROMPTs), and of mRNAs with processing defects, thereby limiting or excluding their export to the cytoplasm. The RNA exosome may be involved in Ig class switch recombination (CSR) and/or Ig variable region somatic hypermutation (SHM) by targeting AICDA deamination activity to transcribed dsDNA substrates. In the cytoplasm, the RNA exosome complex is involved in general mRNA turnover and specifically degrades inherently unstable mRNAs containing AU-rich elements (AREs) within their 3' untranslated regions, and in RNA surveillance pathways, preventing translation of aberrant mRNAs. It seems to be involved in degradation of histone mRNA. The catalytic inactive RNA exosome core complex of 9 subunits (Exo-9) is proposed to play a pivotal role in the binding and presentation of RNA for ribonucleolysis, and to serve as a scaffold for the association with catalytic subunits and accessory proteins or complexes. EXOSC3 as peripheral part of the Exo-9 complex stabilizes the hexameric ring of RNase PH-domain subunits through contacts with EXOSC9 and EXOSC5. This chain is Exosome complex component RRP40 (Exosc3), found in Mus musculus (Mouse).